A 376-amino-acid chain; its full sequence is Light-dependent chlorophyll f synthase (376 aa).

The tract at residues 1–22 is disordered; sequence MKLESDHVIATSDSSDYTSEPT. The span at 11 to 22 shows a compositional bias: polar residues; the sequence is TSDSSDYTSEPT. A run of 5 helical transmembrane segments spans residues 51-68, 140-155, 164-178, 219-240, and 298-312; these read YVGWFGVLMIPCVLTAAT, HFLIGIIAYQDREWEL, WISLAFTAPVAASVS, LHQLGVIGVLGGAFAAAMHGSL, and FLAALPVAGIWSAAL. H140 provides a ligand contact to a chlorophyll. H220 lines the a chlorophyll pocket.

Belongs to the reaction center PufL/M/PsbA/D family. As to quaternary structure, homodimer.

The protein resides in the cellular thylakoid membrane. Its function is as follows. Synthesizes chlorophyll f or chlorophyllide f (Chl f, 2-formyl chlorophyll a), probably by oxidation of chlorophyll a or chlorophyllide a and reduction of plastoquinone. The reaction is probably light-dependent. Chl f absorbs far red light (FRL, 707 nm in 100% methanol), and is synthesized when cells are grown in FRL, where it provides the advantage of extending the spectral range of harvested light in terrestrial cyanobacteria. When ectopically expressed in Synechococcus PCC 7002 (which does not grow in FRL and does not make Chl f) produces Chl f (0.059% of total chlorophyll). This chain is Light-dependent chlorophyll f synthase, found in Chlorogloeopsis fritschii (strain PCC 9212).